A 324-amino-acid polypeptide reads, in one-letter code: Delta-aminolevulinic acid dehydratase (324 aa).

C118, C120, and C128 together coordinate Zn(2+). K195 (schiff-base intermediate with substrate) is an active-site residue. Positions 205 and 217 each coordinate 5-aminolevulinate. Residue E233 participates in Mg(2+) binding. K248 acts as the Schiff-base intermediate with substrate in catalysis. Residues S274 and Y313 each contribute to the 5-aminolevulinate site.

This sequence belongs to the ALAD family. In terms of assembly, homooctamer. Zn(2+) serves as cofactor.

The catalysed reaction is 2 5-aminolevulinate = porphobilinogen + 2 H2O + H(+). It functions in the pathway porphyrin-containing compound metabolism; protoporphyrin-IX biosynthesis; coproporphyrinogen-III from 5-aminolevulinate: step 1/4. Functionally, catalyzes an early step in the biosynthesis of tetrapyrroles. Binds two molecules of 5-aminolevulinate per subunit, each at a distinct site, and catalyzes their condensation to form porphobilinogen. In Staphylococcus epidermidis (strain ATCC 12228 / FDA PCI 1200), this protein is Delta-aminolevulinic acid dehydratase (hemB).